Here is a 137-residue protein sequence, read N- to C-terminus: ATP synthase epsilon chain (137 aa).

Belongs to the ATPase epsilon chain family. As to quaternary structure, F-type ATPases have 2 components, CF(1) - the catalytic core - and CF(0) - the membrane proton channel. CF(1) has five subunits: alpha(3), beta(3), gamma(1), delta(1), epsilon(1). CF(0) has three main subunits: a, b and c.

It localises to the cell membrane. Its function is as follows. Produces ATP from ADP in the presence of a proton gradient across the membrane. In Desulforudis audaxviator (strain MP104C), this protein is ATP synthase epsilon chain.